Consider the following 192-residue polypeptide: 3-hydroxyanthranilate 3,4-dioxygenase 1 (192 aa).

Arg50 is an O2 binding site. Fe cation is bound by residues His54, Glu60, and His102. Position 60 (Glu60) interacts with substrate. 2 residues coordinate substrate: Arg106 and Glu116. Positions 131, 134, 168, and 171 each coordinate a divalent metal cation.

It belongs to the 3-HAO family. Requires Fe(2+) as cofactor.

It is found in the cytoplasm. It catalyses the reaction 3-hydroxyanthranilate + O2 = (2Z,4Z)-2-amino-3-carboxymuconate 6-semialdehyde. Its pathway is cofactor biosynthesis; NAD(+) biosynthesis; quinolinate from L-kynurenine: step 3/3. Functionally, catalyzes the oxidative ring opening of 3-hydroxyanthranilate to 2-amino-3-carboxymuconate semialdehyde, which spontaneously cyclizes to quinolinate. This is 3-hydroxyanthranilate 3,4-dioxygenase 1 (bna1-1) from Aspergillus fumigatus (strain CBS 144.89 / FGSC A1163 / CEA10) (Neosartorya fumigata).